We begin with the raw amino-acid sequence, 249 residues long: Vitamin B12 import ATP-binding protein BtuD (249 aa).

The ABC transporter domain occupies 1–233; sequence MSIVMQLQDV…PNLAQAYGMN (233 aa). 33-40 provides a ligand contact to ATP; the sequence is GPNGAGKS.

Belongs to the ABC transporter superfamily. Vitamin B12 importer (TC 3.A.1.13.1) family. The complex is composed of two ATP-binding proteins (BtuD), two transmembrane proteins (BtuC) and a solute-binding protein (BtuF).

It is found in the cell inner membrane. The catalysed reaction is an R-cob(III)alamin(out) + ATP + H2O = an R-cob(III)alamin(in) + ADP + phosphate + H(+). Functionally, part of the ABC transporter complex BtuCDF involved in vitamin B12 import. Responsible for energy coupling to the transport system. This is Vitamin B12 import ATP-binding protein BtuD from Escherichia coli (strain K12 / DH10B).